A 436-amino-acid chain; its full sequence is Glutamyl-tRNA reductase (436 aa).

Residues 49–52 (TCNR), Ser-109, 114–116 (EGQ), and Gln-120 contribute to the substrate site. Cys-50 functions as the Nucleophile in the catalytic mechanism. 198-203 (GAGRMS) lines the NADP(+) pocket.

Belongs to the glutamyl-tRNA reductase family. Homodimer.

It carries out the reaction (S)-4-amino-5-oxopentanoate + tRNA(Glu) + NADP(+) = L-glutamyl-tRNA(Glu) + NADPH + H(+). The protein operates within porphyrin-containing compound metabolism; protoporphyrin-IX biosynthesis; 5-aminolevulinate from L-glutamyl-tRNA(Glu): step 1/2. It functions in the pathway porphyrin-containing compound metabolism; chlorophyll biosynthesis. In terms of biological role, catalyzes the NADPH-dependent reduction of glutamyl-tRNA(Glu) to glutamate 1-semialdehyde (GSA). The protein is Glutamyl-tRNA reductase of Prochlorococcus marinus (strain MIT 9312).